Consider the following 336-residue polypeptide: Holliday junction branch migration complex subunit RuvB (336 aa).

Positions 4 to 184 are large ATPase domain (RuvB-L); sequence SDRLISSQSI…FGIVQRLEYY (181 aa). Residues isoleucine 23, arginine 24, glycine 65, lysine 68, threonine 69, threonine 70, 131-133, arginine 174, tyrosine 184, and arginine 221 contribute to the ATP site; that span reads EDY. Residue threonine 69 coordinates Mg(2+). The tract at residues 185–255 is small ATPAse domain (RuvB-S); it reads SVDSLTKIVA…MAQQALEMLE (71 aa). The interval 258 to 336 is head domain (RuvB-H); the sequence is QHGFDLMDRK…HFGFSAIEQE (79 aa). Arginine 313 and arginine 318 together coordinate DNA.

Belongs to the RuvB family. As to quaternary structure, homohexamer. Forms an RuvA(8)-RuvB(12)-Holliday junction (HJ) complex. HJ DNA is sandwiched between 2 RuvA tetramers; dsDNA enters through RuvA and exits via RuvB. An RuvB hexamer assembles on each DNA strand where it exits the tetramer. Each RuvB hexamer is contacted by two RuvA subunits (via domain III) on 2 adjacent RuvB subunits; this complex drives branch migration. In the full resolvosome a probable DNA-RuvA(4)-RuvB(12)-RuvC(2) complex forms which resolves the HJ.

It is found in the cytoplasm. The catalysed reaction is ATP + H2O = ADP + phosphate + H(+). Functionally, the RuvA-RuvB-RuvC complex processes Holliday junction (HJ) DNA during genetic recombination and DNA repair, while the RuvA-RuvB complex plays an important role in the rescue of blocked DNA replication forks via replication fork reversal (RFR). RuvA specifically binds to HJ cruciform DNA, conferring on it an open structure. The RuvB hexamer acts as an ATP-dependent pump, pulling dsDNA into and through the RuvAB complex. RuvB forms 2 homohexamers on either side of HJ DNA bound by 1 or 2 RuvA tetramers; 4 subunits per hexamer contact DNA at a time. Coordinated motions by a converter formed by DNA-disengaged RuvB subunits stimulates ATP hydrolysis and nucleotide exchange. Immobilization of the converter enables RuvB to convert the ATP-contained energy into a lever motion, pulling 2 nucleotides of DNA out of the RuvA tetramer per ATP hydrolyzed, thus driving DNA branch migration. The RuvB motors rotate together with the DNA substrate, which together with the progressing nucleotide cycle form the mechanistic basis for DNA recombination by continuous HJ branch migration. Branch migration allows RuvC to scan DNA until it finds its consensus sequence, where it cleaves and resolves cruciform DNA. This Legionella pneumophila (strain Paris) protein is Holliday junction branch migration complex subunit RuvB.